The chain runs to 1032 residues: Structural polyprotein (1032 aa).

Asp-23 contributes to the a divalent metal cation binding site. The Peptidase S50 domain maps to 501–723 (ADSPLGEEHW…QTLPHWTAGS (223 aa)). The active-site Nucleophile is Ser-627. Residue Lys-670 is part of the active site. A disordered region spans residues 986-1014 (LVNQPATAPRVPPRRIVSAQTAQTDPPGR). The interaction with VP1 protein stretch occupies residues 1021-1030 (LRRVRGEDND).

In terms of assembly, homotrimer. A central divalent metal stabilizes the VP2 trimer. As to quaternary structure, homodimer. Interacts (via C-terminus) with VP1 in the cytoplasm. Capsid VP3 interacts with VP2. Post-translationally, specific enzymatic cleavages yield mature proteins. The capsid assembly seems to be regulated by polyprotein processing. The protease VP4 cleaves itself off the polyprotein, thus releasing pre-VP2 and VP3 within the infected cell. During capsid assembly, the C-terminus of pre-VP2 is further processed by VP4, giving rise to VP2, the external capsid protein and three small peptides that all stay closely associated with the capsid.

The protein localises to the virion. The protein resides in the host cytoplasm. Capsid protein VP2 self assembles to form an icosahedral capsid with a T=13 symmetry, about 70 nm in diameter, and consisting of 260 VP2 trimers. The capsid encapsulates the genomic dsRNA. VP2 is also involved in attachment and entry into the host cell. Its function is as follows. The precursor of VP2 plays an important role in capsid assembly. First, pre-VP2 and VP2 oligomers assemble to form a procapsid. Then, the pre-VP2 intermediates may be processed into VP2 proteins by proteolytic cleavage mediated by VP4 to obtain the mature virion. The final capsid is composed of pentamers and hexamers but VP2 has a natural tendency to assemble into all-pentameric structures. Therefore pre-VP2 may be required to allow formation of the hexameric structures. Functionally, protease VP4 is a serine protease that cleaves the polyprotein into its final products. Pre-VP2 is first partially cleaved, and may be completely processed by VP4 upon capsid maturation. In terms of biological role, capsid protein VP3 plays a key role in virion assembly by providing a scaffold for the capsid made of VP2. May self-assemble to form a T=4-like icosahedral inner-capsid composed of at least 180 trimers. Plays a role in genomic RNA packaging by recruiting VP1 into the capsid and interacting with the dsRNA genome segments to form a ribonucleoprotein complex. Additionally, the interaction of the VP3 C-terminal tail with VP1 removes the inherent structural blockade of the polymerase active site. Thus, VP3 can also function as a transcriptional activator. Structural peptide 1 is a small peptide derived from pre-VP2 C-terminus. It destabilizes and perforates cell membranes, suggesting a role during entry. Its function is as follows. Structural peptide 2 is a small peptide derived from pre-VP2 C-terminus. It is not essential for the virus viability, but viral growth is affected when missing. Functionally, structural peptide 3 is a small peptide derived from pre-VP2 C-terminus. It is not essential for the virus viability, but viral growth is affected when missing. The protein is Structural polyprotein of Drosophila melanogaster (Fruit fly).